The chain runs to 338 residues: Phenylalanine--tRNA ligase alpha subunit (338 aa).

Glu252 contacts Mg(2+).

It belongs to the class-II aminoacyl-tRNA synthetase family. Phe-tRNA synthetase alpha subunit type 1 subfamily. In terms of assembly, tetramer of two alpha and two beta subunits. Mg(2+) serves as cofactor.

The protein localises to the cytoplasm. It catalyses the reaction tRNA(Phe) + L-phenylalanine + ATP = L-phenylalanyl-tRNA(Phe) + AMP + diphosphate + H(+). In Pseudomonas entomophila (strain L48), this protein is Phenylalanine--tRNA ligase alpha subunit.